Here is a 246-residue protein sequence, read N- to C-terminus: MTYMKEYYTKIIEALNTISEKEDKEIASAAKSMATAVMNGNSIYLFGASHAGIIAEDAFYRAGGFALFNPIFSPSLMLNVEPVTQTSKLERLEGYGDILLDSKPVKKGDILFIHSVSGRNAVAIDMALTAKERGMGVICLTNLEYSKQVTSRHSSGYRLFELSDTVIDNGGEPGDAVVSIDLLTQKVAPISTIVGSYTIHSIVLKMIEIFEEAGTDIPIFRSANIDGGDDYNSQLFEKYKDQIHYM.

An SIS domain is found at 33–212; it reads MATAVMNGNS…VLKMIEIFEE (180 aa).

The protein belongs to the UPF0309 family.

The polypeptide is UPF0309 protein OB3413 (Oceanobacillus iheyensis (strain DSM 14371 / CIP 107618 / JCM 11309 / KCTC 3954 / HTE831)).